Here is a 479-residue protein sequence, read N- to C-terminus: Mannose-1-phosphate guanylyltransferase RfbM (479 aa).

It belongs to the mannose-6-phosphate isomerase type 2 family. In terms of assembly, homodimer.

It catalyses the reaction alpha-D-mannose 1-phosphate + GTP + H(+) = GDP-alpha-D-mannose + diphosphate. It participates in nucleotide-sugar biosynthesis; GDP-alpha-D-mannose biosynthesis; GDP-alpha-D-mannose from alpha-D-mannose 1-phosphate (GTP route): step 1/1. The protein operates within bacterial outer membrane biogenesis; LPS O-antigen biosynthesis. In terms of biological role, involved in GDP-mannose biosynthesis which serves as the activated sugar nucleotide precursor for mannose residues in cell surface polysaccharides. This enzyme participates in synthesis of the LPS group B O antigen. The polypeptide is Mannose-1-phosphate guanylyltransferase RfbM (rfbM) (Salmonella typhimurium (strain LT2 / SGSC1412 / ATCC 700720)).